The chain runs to 148 residues: MADEEIRHLVRIMNTDLQGKKPVKYALTGIRGIGLRTSRVIVDSTGIDPNAVIGYLSDEDIKKLDSTIDKFEEQLPKWMLNRQFDPLTGENKHLLGQDIILTLKEDLNDLKKSRAYRGLRHERGLKVRGQRTKSTGRRGSTIGVRKKK.

The tract at residues 128–148 (RGQRTKSTGRRGSTIGVRKKK) is disordered.

It belongs to the universal ribosomal protein uS13 family. Part of the 30S ribosomal subunit. Forms a loose heterodimer with protein S19. Forms two bridges to the 50S subunit in the 70S ribosome.

Located at the top of the head of the 30S subunit, it contacts several helices of the 16S rRNA. In the 70S ribosome it contacts the 23S rRNA (bridge B1a) and protein L5 of the 50S subunit (bridge B1b), connecting the 2 subunits; these bridges are implicated in subunit movement. In Methanococcoides burtonii (strain DSM 6242 / NBRC 107633 / OCM 468 / ACE-M), this protein is Small ribosomal subunit protein uS13.